The primary structure comprises 216 residues: Major fimbrial subunit (216 aa).

Residues 1–20 (MKKTLLGSLILLAFAGNVQA) form the signal peptide. Cysteines 41 and 81 form a disulfide.

It belongs to the fimbrial protein family.

Its subcellular location is the fimbrium. Functionally, mediates adherence to oropharyngeal epithelial cells. Helps the airway colonization process. The chain is Major fimbrial subunit (hifA) from Haemophilus influenzae.